Consider the following 341-residue polypeptide: DNA-directed RNA polymerase subunit alpha (341 aa).

Residues 1–233 form an alpha N-terminal domain (alpha-NTD) region; the sequence is MLKDGTSVSN…DLLSPFLHTK (233 aa). The alpha C-terminal domain (alpha-CTD) stretch occupies residues 262–341; that stretch reads SEGDFFKNTF…NEKPRVVGDE (80 aa).

Belongs to the RNA polymerase alpha chain family. As to quaternary structure, in plastids the minimal PEP RNA polymerase catalytic core is composed of four subunits: alpha, beta, beta', and beta''. When a (nuclear-encoded) sigma factor is associated with the core the holoenzyme is formed, which can initiate transcription.

Its subcellular location is the plastid. It localises to the chloroplast. It carries out the reaction RNA(n) + a ribonucleoside 5'-triphosphate = RNA(n+1) + diphosphate. DNA-dependent RNA polymerase catalyzes the transcription of DNA into RNA using the four ribonucleoside triphosphates as substrates. The sequence is that of DNA-directed RNA polymerase subunit alpha from Marsilea quadrifolia (European water clover).